The following is a 161-amino-acid chain: Cell division protein SepF 2 (161 aa).

Residues 19–47 (EDSEKAPELSSSRETKTKNQNQSKSLLRS) form a disordered region. The segment covering 21–35 (SEKAPELSSSRETKT) has biased composition (basic and acidic residues).

It belongs to the SepF family. In terms of assembly, homodimer. Interacts with FtsZ.

Its subcellular location is the cytoplasm. Cell division protein that is part of the divisome complex and is recruited early to the Z-ring. Probably stimulates Z-ring formation, perhaps through the cross-linking of FtsZ protofilaments. Its function overlaps with FtsA. The protein is Cell division protein SepF 2 of Desulforamulus reducens (strain ATCC BAA-1160 / DSM 100696 / MI-1) (Desulfotomaculum reducens).